The primary structure comprises 273 residues: MNNRVHQGHLARKRFGQNFLNDRFVIDSIVSAINPQKGQAMVEIGPGLAALTEPVGERLDKLTVIELDRDLAARLQTHPFLGPKLTIYQQDAMTMNFGELSAQLGQPLRVFGNLPYNISTPLMFHLFSYTDAIADMHFMLQKEVVNRLVAGPNSKAYGRLSVMAQYYCQVIPVLEVPPSAFTPPPKVDSAVVRLVPHATMPYPVKDIRVLSRITTEAFNQRRKTIRNSLDNLFSVETLTEMGIDPAMRAENISVAQYCQMANYLSENAPLKES.

S-adenosyl-L-methionine contacts are provided by N18, L20, G45, E66, D91, and N113.

The protein belongs to the class I-like SAM-binding methyltransferase superfamily. rRNA adenine N(6)-methyltransferase family. RsmA subfamily.

It is found in the cytoplasm. It carries out the reaction adenosine(1518)/adenosine(1519) in 16S rRNA + 4 S-adenosyl-L-methionine = N(6)-dimethyladenosine(1518)/N(6)-dimethyladenosine(1519) in 16S rRNA + 4 S-adenosyl-L-homocysteine + 4 H(+). Functionally, specifically dimethylates two adjacent adenosines (A1518 and A1519) in the loop of a conserved hairpin near the 3'-end of 16S rRNA in the 30S particle. May play a critical role in biogenesis of 30S subunits. In Salmonella newport (strain SL254), this protein is Ribosomal RNA small subunit methyltransferase A.